We begin with the raw amino-acid sequence, 128 residues long: NHP2-like protein 1 (128 aa).

The tract at residues R36 to R48 is interaction with U4 snRNA and U4atac snRNA. The interval S96–V128 is important for U4 snRNA-binding.

This sequence belongs to the eukaryotic ribosomal protein eL8 family. As to quaternary structure, identified in the spliceosome B complex. Component of the U4/U6-U5 tri-snRNP complex. Part of the small subunit (SSU) processome, composed of more than 70 proteins and the RNA chaperone small nucleolar RNA (snoRNA) U3.

The protein localises to the nucleus. Its subcellular location is the nucleolus. In terms of biological role, part of the small subunit (SSU) processome, first precursor of the small eukaryotic ribosomal subunit. During the assembly of the SSU processome in the nucleolus, many ribosome biogenesis factors, an RNA chaperone and ribosomal proteins associate with the nascent pre-rRNA and work in concert to generate RNA folding, modifications, rearrangements and cleavage as well as targeted degradation of pre-ribosomal RNA by the RNA exosome. Involved in pre-mRNA splicing as component of the spliceosome. Binds to the 5'-stem-loop of U4 snRNA and thereby contributes to spliceosome assembly. The protein undergoes a conformational change upon RNA-binding. Core component of box C/D small nucleolar ribonucleoprotein (snoRNP) complexes that function in methylation of multiple sites on ribosomal RNAs (rRNAs) and messenger RNAs (mRNAs). The protein is NHP2-like protein 1 of Xenopus laevis (African clawed frog).